Consider the following 327-residue polypeptide: MPHLADLVASAKAAITSAQDVAALDNVRVEYLGKKGHLTLQMTTLRELPPEERPAAGAVINEAKEQVQQALNARKNELESAALNARLAAETIDVSLPGRRVENGGLHPVTRTIDRIESFFGELGFTVATGPEIEDDYHNFDALNIPGHHPARADHDTFWFDATRLLRTQTSGVQIRTMKNQQPPIRIIAPGRVYRNDYDQTHTPMFHQMEGLIVDKNISFTNLKGTLHDFLRNFFEEDLQIRFRPSYFPFTEPSAEVDVMGKNGKWLEVLGCGMVHPNVLRNVGIDPEVYSGFAFGMGMERLTMLRYGVTDLRAFFENDLRFLKQFK.

A Mg(2+)-binding site is contributed by Glu-252.

It belongs to the class-II aminoacyl-tRNA synthetase family. Phe-tRNA synthetase alpha subunit type 1 subfamily. In terms of assembly, tetramer of two alpha and two beta subunits. Mg(2+) is required as a cofactor.

The protein resides in the cytoplasm. It catalyses the reaction tRNA(Phe) + L-phenylalanine + ATP = L-phenylalanyl-tRNA(Phe) + AMP + diphosphate + H(+). The polypeptide is Phenylalanine--tRNA ligase alpha subunit (Cronobacter sakazakii (strain ATCC BAA-894) (Enterobacter sakazakii)).